The chain runs to 236 residues: Growth-regulating factor 12 (236 aa).

Residues 1 to 27 (MLAEGRQVYLPPPPPSKLPRLSGTDPT) form a disordered region. The QLQ domain maps to 74-109 (ALTFMQRQELEQQVLIYRYFAAGAPVPVHLVLPIWK). The region spanning 140–184 (EPEPGRCRRTDGKKWRCSRDVVPGHKYCERHVHRGRGRSRKPMEA) is the WRC domain. 2 consecutive short sequence motifs (bipartite nuclear localization signal) follow at residues 145-155 (RCRRTDGKKWR) and 173-180 (RGRGRSRK).

Belongs to the GRF family.

The protein resides in the nucleus. Transcription activator that plays a regulatory role in gibberellin-induced stem elongation. In Oryza sativa subsp. japonica (Rice), this protein is Growth-regulating factor 12 (GRF12).